Reading from the N-terminus, the 556-residue chain is Glucose-6-phosphate isomerase (556 aa).

The Proton donor role is filled by glutamate 364. Residues histidine 395 and lysine 521 contribute to the active site.

The protein belongs to the GPI family.

It localises to the cytoplasm. The enzyme catalyses alpha-D-glucose 6-phosphate = beta-D-fructose 6-phosphate. The protein operates within carbohydrate biosynthesis; gluconeogenesis. Its pathway is carbohydrate degradation; glycolysis; D-glyceraldehyde 3-phosphate and glycerone phosphate from D-glucose: step 2/4. Functionally, catalyzes the reversible isomerization of glucose-6-phosphate to fructose-6-phosphate. The polypeptide is Glucose-6-phosphate isomerase (Corynebacterium kroppenstedtii (strain DSM 44385 / JCM 11950 / CIP 105744 / CCUG 35717)).